Here is a 157-residue protein sequence, read N- to C-terminus: Protein Smg homolog (157 aa).

Belongs to the Smg family.

The sequence is that of Protein Smg homolog from Shewanella denitrificans (strain OS217 / ATCC BAA-1090 / DSM 15013).